We begin with the raw amino-acid sequence, 192 residues long: Large ribosomal subunit protein uL5 (192 aa).

The protein belongs to the universal ribosomal protein uL5 family. In terms of assembly, part of the 50S ribosomal subunit; part of the 5S rRNA/L5/L18/L25 subcomplex. Contacts the 5S rRNA and the P site tRNA. Forms a bridge to the 30S subunit in the 70S ribosome.

This is one of the proteins that bind and probably mediate the attachment of the 5S RNA into the large ribosomal subunit, where it forms part of the central protuberance. In the 70S ribosome it contacts protein S13 of the 30S subunit (bridge B1b), connecting the 2 subunits; this bridge is implicated in subunit movement. Contacts the P site tRNA; the 5S rRNA and some of its associated proteins might help stabilize positioning of ribosome-bound tRNAs. The sequence is that of Large ribosomal subunit protein uL5 from Mesorhizobium japonicum (strain LMG 29417 / CECT 9101 / MAFF 303099) (Mesorhizobium loti (strain MAFF 303099)).